The sequence spans 363 residues: MTPPLLEIRNVTRRFGDFTAVDNVSLTINTGEFFTLLGPSGCGKTTLLRMLAGFDQPDSGEIRLNGQDLAGVEPEKRPVHTVFQSYALFPHMSVAQNIAFPLKMAGVAKSEIDARVEQALKDVRLADKGGRMPTQLSGGQRQRVAIARALVNRPRLLLLDEPLSALDAKLREEMQIELINLQKDVGITFVYVTHDQGEALALSHRIAVMNQGRVEQLDAPETIYSFPRSRFVADFIGQCNLLDATVEAVDGERVRIDLRGLGEVQALKSFDAQPGEACVLTLRPEKIRLAQSVTADSNEVHFRGRVAELLYLGDVTLYIVELENGERLETLLPNATPGRTKFFEVGDAVEAAWRFDAGHLVRA.

The region spanning 6–236 (LEIRNVTRRF…PRSRFVADFI (231 aa)) is the ABC transporter domain. 38–45 (GPSGCGKT) is an ATP binding site.

It belongs to the ABC transporter superfamily. Spermidine/putrescine importer (TC 3.A.1.11.1) family. In terms of assembly, the complex is composed of two ATP-binding proteins (PotA), two transmembrane proteins (PotB and PotC) and a solute-binding protein (PotD).

Its subcellular location is the cell inner membrane. It catalyses the reaction ATP + H2O + polyamine-[polyamine-binding protein]Side 1 = ADP + phosphate + polyamineSide 2 + [polyamine-binding protein]Side 1.. In terms of biological role, part of the ABC transporter complex PotABCD involved in spermidine/putrescine import. Responsible for energy coupling to the transport system. This chain is Spermidine/putrescine import ATP-binding protein PotA, found in Pseudomonas aeruginosa (strain UCBPP-PA14).